The following is a 185-amino-acid chain: Regulator of rDNA transcription protein 13 (185 aa).

WD repeat units lie at residues 9-48, 71-108, and 111-148; these read GHTD…NNGE, GHRA…LKHF, and HTQL…LVRS.

Functionally, may be involved in the modulation of rDNA transcription. In Saccharomyces cerevisiae (strain ATCC 204508 / S288c) (Baker's yeast), this protein is Regulator of rDNA transcription protein 13 (RRT13).